Consider the following 173-residue polypeptide: Putative phosphoesterase GTNG_0743 (173 aa).

H34 (proton donor) is an active-site residue. Short sequence motifs (HXTX) lie at residues 34-37 and 115-118; these read HITL and HITI. H115 serves as the catalytic Proton acceptor.

Belongs to the 2H phosphoesterase superfamily. YjcG family.

In Geobacillus thermodenitrificans (strain NG80-2), this protein is Putative phosphoesterase GTNG_0743.